The primary structure comprises 533 residues: Solute carrier family 2, facilitated glucose transporter member 2 (533 aa).

Topologically, residues 1 to 17 are cytoplasmic; it reads MDGKSKMQAEKHLTGTL. A helical membrane pass occupies residues 18–38; it reads VLSVFTAVLGFFQYGYSLGVI. The Extracellular segment spans residues 39–110; it reads NAPQKVIEAH…SPHILTMYWS (72 aa). Residues Asn64 and Asn69 are each glycosylated (N-linked (GlcNAc...) asparagine). Residues 111–131 traverse the membrane as a helical segment; that stretch reads LSVSMFAVGGMVSSFTVGWIG. Residues 132–136 lie on the Cytoplasmic side of the membrane; the sequence is DRLGR. The chain crosses the membrane as a helical span at residues 137–157; it reads VKAMLVVNVLSIAGNLLMGLA. The Extracellular portion of the chain corresponds to 158–163; the sequence is KMGPSH. A helical membrane pass occupies residues 164 to 184; it reads ILIIAGRAITGLYCGLSSGLV. Residues 185–199 are Cytoplasmic-facing; the sequence is PMYVSEVSPTALRGA. Residues 200–220 traverse the membrane as a helical segment; sequence LGTLHQLAIVTGILISQVLGL. Position 205 (Gln205) interacts with D-glucose. The Extracellular portion of the chain corresponds to 221-229; sequence DFLLGNDEL. The chain crosses the membrane as a helical span at residues 230–250; sequence WPLLLGLSGVAALLQFFLLLL. At 251-315 the chain is on the cytoplasmic side; it reads CPESPRYLYI…LFSSSKYRQA (65 aa). The helical transmembrane segment at 316-336 threads the bilayer; that stretch reads VIVALMVQISQQFSGINAIFY. D-glucose-binding positions include 326–327 and Asn332; that span reads QQ. The Extracellular portion of the chain corresponds to 337 to 350; it reads YSTNIFQRAGVGQP. Residues 351 to 371 form a helical membrane-spanning segment; it reads VYATIGVGVVNTVFTVISVFL. Asn361 serves as a coordination point for D-glucose. Topologically, residues 372 to 379 are cytoplasmic; that stretch reads VEKAGRRS. Residues 380–400 traverse the membrane as a helical segment; it reads LFLAGLMGMLISAVAMTVGLV. The Extracellular segment spans residues 401–413; the sequence is LLSQFAWMSYVSM. A helical membrane pass occupies residues 414–434; the sequence is VAIFLFVIFFEVGPGPIPWFI. D-glucose is bound by residues Glu424 and Trp432. The Cytoplasmic portion of the chain corresponds to 435–445; the sequence is VAELFSQGPRP. Residues 446-466 form a helical membrane-spanning segment; that stretch reads AAIAVAGFCNWACNFIVGMCF. Residues 467–471 lie on the Extracellular side of the membrane; the sequence is QYIAD. Residues 472-492 traverse the membrane as a helical segment; that stretch reads LCGPYVFVVFAVLLLVFFLFA. The Cytoplasmic portion of the chain corresponds to 493 to 533; that stretch reads YLKVPETKGKSFEEIAAAFRRKKLPAKSMTELEDLRGGEEA.

Belongs to the major facilitator superfamily. Sugar transporter (TC 2.A.1.1) family. Glucose transporter subfamily.

It localises to the cell membrane. It catalyses the reaction D-glucose(out) = D-glucose(in). It carries out the reaction D-fructose(out) = D-fructose(in). The catalysed reaction is L-dehydroascorbate(out) = L-dehydroascorbate(in). The enzyme catalyses D-galactose(in) = D-galactose(out). D-glucose and maltose competitively inhibit fructose transport. D-glucose, D-fructose and maltose inhibit deoxyglucose transport. Facilitative hexose transporter that mediates the transport of glucose, fructose and galactose. Likely mediates the bidirectional transfer of glucose across the plasma membrane of hepatocytes and is responsible for uptake of glucose by the beta cells. The protein is Solute carrier family 2, facilitated glucose transporter member 2 of Gallus gallus (Chicken).